The sequence spans 621 residues: Phosphatidylinositol-3,5-bisphosphate 3-phosphatase MTMR6 (621 aa).

The GRAM domain occupies M1–Q101. Residues E2–N141 form an interaction with RAB1B region. At Y108 the chain carries Phosphotyrosine. One can recognise a Myotubularin phosphatase domain in the interval G124–Y499. A 1,2-diacyl-sn-glycero-3-phospho-(1D-myo-inositol-3,5-bisphosphate) contacts are provided by N248, N273, and I274. The a 1,2-diacyl-sn-glycero-3-phospho-(1D-myo-inositol-3-phosphate) site is built by N248, N273, and I274. C336 acts as the Phosphocysteine intermediate in catalysis. S337, D338, G339, W340, D341, R342, K378, and R382 together coordinate a 1,2-diacyl-sn-glycero-3-phospho-(1D-myo-inositol-3,5-bisphosphate). Positions 337, 338, 339, 340, 341, and 342 each coordinate a 1,2-diacyl-sn-glycero-3-phospho-(1D-myo-inositol-3-phosphate). Residue R382 participates in a 1,2-diacyl-sn-glycero-3-phospho-(1D-myo-inositol-3-phosphate) binding. Residues S556, S561, S589, and S611 each carry the phosphoserine modification.

The protein belongs to the protein-tyrosine phosphatase family. Non-receptor class myotubularin subfamily. Homodimer. Heterodimer (via C-terminus) with MTMR9 (via C-terminus). Interacts with ALKBH4. Interacts with KCNN4. Interacts (via GRAM domain) with RAB1B (in GDP-bound form); the interaction regulates MTMR6 recruitment to the endoplasmic reticulum-Golgi intermediate compartment. As to expression, expressed in CD4+ T-cells.

Its subcellular location is the cytoplasm. The protein resides in the endoplasmic reticulum-Golgi intermediate compartment. It is found in the endoplasmic reticulum. The protein localises to the cell projection. It localises to the ruffle membrane. Its subcellular location is the perinuclear region. The catalysed reaction is a 1,2-diacyl-sn-glycero-3-phospho-(1D-myo-inositol-3,5-bisphosphate) + H2O = a 1,2-diacyl-sn-glycero-3-phospho-(1D-myo-inositol-5-phosphate) + phosphate. It carries out the reaction a 1,2-diacyl-sn-glycero-3-phospho-(1D-myo-inositol-3-phosphate) + H2O = a 1,2-diacyl-sn-glycero-3-phospho-(1D-myo-inositol) + phosphate. The enzyme catalyses 1,2-dioctanoyl-sn-glycero-3-phospho-(1D-myo-inositol-3,5-bisphosphate) + H2O = 1,2-dioctanoyl-sn-glycero-3-phospho-(1D-myo-inositol-5-phosphate) + phosphate. It catalyses the reaction 1,2-dioctanoyl-sn-glycero-3-phospho-(1-D-myo-inositol-3-phosphate) + H2O = 1,2-dioctanoyl-sn-glycero-3-phospho-(1D-myo-inositol) + phosphate. Allosterically activated by phosphatidylserine and/or phosphatidylinositol 4-phosphate (PtdIns(4)P), and phosphatidylinositol 5-phosphate (PtdIns(5)P). Interaction with MTMR9 increases catalytic activity towards phosphatidylinositol 3,5-bisphosphate. Lipid phosphatase that specifically dephosphorylates the D-3 position of phosphatidylinositol 3-phosphate and phosphatidylinositol 3,5-bisphosphate, generating phosphatidylinositol and phosphatidylinositol 5-phosphate. Binds with high affinity to phosphatidylinositol 3,5-bisphosphate (PtdIns(3,5)P2) but also to phosphatidylinositol 3-phosphate (PtdIns(3)P), phosphatidylinositol 4-phosphate (PtdIns(4)P), and phosphatidylinositol 5-phosphate (PtdIns(5)P), phosphatidic acid and phosphatidylserine. Negatively regulates ER-Golgi protein transport. Probably in association with MTMR9, plays a role in the late stages of macropinocytosis by dephosphorylating phosphatidylinositol 3-phosphate in membrane ruffles. Acts as a negative regulator of KCNN4/KCa3.1 channel activity in CD4(+) T-cells possibly by decreasing intracellular levels of phosphatidylinositol 3-phosphate. Negatively regulates proliferation of reactivated CD4(+) T-cells. In complex with MTMR9, negatively regulates DNA damage-induced apoptosis. The formation of the MTMR6-MTMR9 complex stabilizes both MTMR6 and MTMR9 protein levels. The protein is Phosphatidylinositol-3,5-bisphosphate 3-phosphatase MTMR6 of Homo sapiens (Human).